We begin with the raw amino-acid sequence, 159 residues long: Protein-export protein SecB (159 aa).

Belongs to the SecB family. As to quaternary structure, homotetramer, a dimer of dimers. One homotetramer interacts with 1 SecA dimer.

It localises to the cytoplasm. Its function is as follows. One of the proteins required for the normal export of preproteins out of the cell cytoplasm. It is a molecular chaperone that binds to a subset of precursor proteins, maintaining them in a translocation-competent state. It also specifically binds to its receptor SecA. The sequence is that of Protein-export protein SecB from Rhizobium etli (strain CIAT 652).